We begin with the raw amino-acid sequence, 130 residues long: Small ribosomal subunit protein uS11 (130 aa).

It belongs to the universal ribosomal protein uS11 family. In terms of assembly, part of the 30S ribosomal subunit. Interacts with proteins S7 and S18. Binds to IF-3.

Its function is as follows. Located on the platform of the 30S subunit, it bridges several disparate RNA helices of the 16S rRNA. Forms part of the Shine-Dalgarno cleft in the 70S ribosome. The protein is Small ribosomal subunit protein uS11 of Buchnera aphidicola subsp. Schizaphis graminum (strain Sg).